A 150-amino-acid polypeptide reads, in one-letter code: Urease accessory protein UreE (150 aa).

The protein belongs to the UreE family.

It localises to the cytoplasm. Involved in urease metallocenter assembly. Binds nickel. Probably functions as a nickel donor during metallocenter assembly. This is Urease accessory protein UreE from Parasynechococcus marenigrum (strain WH8102).